The primary structure comprises 521 residues: Cytochrome P450 monooxygenase astF (521 aa).

The chain crosses the membrane as a helical span at residues 14 to 34 (TMATFLLPVAIGTIILLFLYG). N-linked (GlcNAc...) asparagine glycosylation is found at Asn-198, Asn-218, Asn-268, and Asn-281. Residue Cys-430 coordinates heme.

It belongs to the cytochrome P450 family. Heme is required as a cofactor.

It is found in the membrane. It participates in secondary metabolite biosynthesis; terpenoid biosynthesis. Its function is as follows. Cytochrome P450 monooxygenase; part of the gene cluster that mediates the biosynthesis of astellolides, drimane-type sesquiterpene esters that show antimicrobial, anti-inflammatory, and anti-tumor activities. The first step in astellolide biosynthesis is performed by the sesquiterpene cyclase astC that catalyzes the formation of drimanyl pyrophosphate from farnesyl pyrophosphate. Drimanyl pyrophosphate is then dephosphorylated by the sesquiterpene phosphatase astI to produce drimanyl monophosphate which is further dephosphorylated to drim-8-ene-11-ol by atsK. Drim-8-ene-11-ol is converted to confertifolin, probably by the cytochrome P450 monooxygenase astD and/or the dehydrogenase astE. The cytochrome P450 monooxygenases astB, astF and astJ then hydroxylate confertifolin at C6, C14, or C15 to form trihydroxy confertifolin. The nonribosomal peptide synthetase astA catalyzes ester bond formation between trihydroxy contifolin and benzoic acid (BA) or 4-hydroxy benzoic acid (4HBA), leading to the formation of dideacetyl astellolides A and B, respectively. Finally, the O-acetyltransferase astG converts dideacetyl astellolides A and B into deacetyl astellolides A and B. The polypeptide is Cytochrome P450 monooxygenase astF (Aspergillus oryzae (strain ATCC 42149 / RIB 40) (Yellow koji mold)).